We begin with the raw amino-acid sequence, 375 residues long: Alpha-2,8-sialyltransferase 8B (375 aa).

At 1–6 (MQLQFR) the chain is on the cytoplasmic side. The chain crosses the membrane as a helical; Signal-anchor for type II membrane protein span at residues 7-23 (SWMLAALTLLVVFLIFA). The Lumenal portion of the chain corresponds to 24–375 (DISEIEEEIG…LTVGQCDGAT (352 aa)). Asn-60, Asn-72, Asn-89, and Asn-134 each carry an N-linked (GlcNAc...) asparagine glycan. 2 cysteine pairs are disulfide-bonded: Cys-157–Cys-307 and Cys-171–Cys-371. Residues Asn-162 and Asn-185 each contribute to the CMP-N-acetyl-beta-neuraminate site. Residues Asn-219 and Asn-234 are each glycosylated (N-linked (GlcNAc...) asparagine). The CMP-N-acetyl-beta-neuraminate site is built by Thr-294, Thr-295, Gly-296, Trp-316, Tyr-329, and His-330. The active-site Proton donor/acceptor is the His-346.

Belongs to the glycosyltransferase 29 family. Post-translationally, autopolysialylated. Autopolysialylation is not a prerequisite for the polysialylation acitity, but enhances the polysialylation acitity. Highly expressed in fetal brain, kidney and heart and to a much lesser extent in adult heart and thymus.

It is found in the golgi apparatus membrane. Its subcellular location is the secreted. The protein localises to the cell membrane. It carries out the reaction [N-acetyl-alpha-D-neuraminosyl-(2-&gt;8)](n) + CMP-N-acetyl-beta-neuraminate = [N-acetyl-alpha-D-neuraminosyl-(2-&gt;8)](n+1) + CMP + H(+). The protein operates within protein modification; protein glycosylation. Functionally, catalyzes the transfer of a sialic acid from a CMP-linked sialic acid donor onto a terminal alpha-2,3-, alpha-2,6-, or alpha-2,8-linked sialic acid of an N-linked glycan acceptor through alpha-2,8-linkages. Therefore, participates in polysialic acid synthesis on various sialylated N-acetyllactosaminyl oligosaccharides (alpha-2,3-, alpha-2,6-, or alpha-2,8-linked sialic acid), including NCAM1, NCAM1 N-glycans, FETUB N-glycans, and to a lesser extent sialylparagloboside (SPG) and AHSG, which does not require the initial addition of an alpha 2,8-sialic acid. However, does not exhibit sialic acid-polymerase activity. Catalyzes polysialic acid synthesis in the hippocampal on NCAM1 and supports neurite outgrowth. ST8SIA2-mediated polysialylation influences on oligodendrocyte differentiation and may promote the integrity of myelin and axons. The sequence is that of Alpha-2,8-sialyltransferase 8B from Homo sapiens (Human).